The following is a 213-amino-acid chain: Kynurenine formamidase (213 aa).

Tryptophan 18 contacts substrate. Residues histidine 48, histidine 52, and aspartate 54 each coordinate Zn(2+). Catalysis depends on histidine 58, which acts as the Proton donor/acceptor. Histidine 160 and glutamate 172 together coordinate Zn(2+).

It belongs to the Cyclase 1 superfamily. KynB family. As to quaternary structure, homodimer. The cofactor is Zn(2+).

The catalysed reaction is N-formyl-L-kynurenine + H2O = L-kynurenine + formate + H(+). It functions in the pathway amino-acid degradation; L-tryptophan degradation via kynurenine pathway; L-kynurenine from L-tryptophan: step 2/2. In terms of biological role, catalyzes the hydrolysis of N-formyl-L-kynurenine to L-kynurenine, the second step in the kynurenine pathway of tryptophan degradation. The chain is Kynurenine formamidase from Burkholderia pseudomallei (strain 668).